The chain runs to 384 residues: Monomeric sarcosine oxidase (384 aa).

6-36 is a binding site for FAD; that stretch reads DVIVIGLGGMGSAAAHHLSARGARVLGLEKF. The residue at position 315 (cysteine 315) is an S-8alpha-FAD cysteine.

It belongs to the MSOX/MTOX family. MSOX subfamily. Monomer. It depends on FAD as a cofactor.

It is found in the cytoplasm. The catalysed reaction is sarcosine + O2 + H2O = formaldehyde + glycine + H2O2. Catalyzes the oxidative demethylation of sarcosine. The chain is Monomeric sarcosine oxidase from Streptomyces avermitilis (strain ATCC 31267 / DSM 46492 / JCM 5070 / NBRC 14893 / NCIMB 12804 / NRRL 8165 / MA-4680).